Consider the following 199-residue polypeptide: MSVIDLPEFFYKAILLLIESGVILGSLGVVLFTNIVYSAFLLGWVPVCISFLYILLNADFVAAVQILIYVGTINVLIVFAVMLINKPQYFRFLKYWTVGDGTALALCTSPFLSIIAAILSTPWSKISLIVLSNKIVEEPLTDNVQRIGFHSLTDSPLPFELLSIILLVAPVGAITMARREEAVEAEESEALKTKDDFPF.

The next 5 helical transmembrane spans lie at 13 to 33 (AILL…VLFT), 35 to 55 (IVYS…LYIL), 64 to 84 (VQIL…VMLI), 96 to 118 (WTVG…IAAI), and 157 to 177 (LPFE…ITMA).

It belongs to the complex I subunit 6 family. NDH is composed of at least 16 different subunits, 5 of which are encoded in the nucleus.

The protein localises to the plastid. It is found in the chloroplast thylakoid membrane. The catalysed reaction is a plastoquinone + NADH + (n+1) H(+)(in) = a plastoquinol + NAD(+) + n H(+)(out). It carries out the reaction a plastoquinone + NADPH + (n+1) H(+)(in) = a plastoquinol + NADP(+) + n H(+)(out). Its function is as follows. NDH shuttles electrons from NAD(P)H:plastoquinone, via FMN and iron-sulfur (Fe-S) centers, to quinones in the photosynthetic chain and possibly in a chloroplast respiratory chain. The immediate electron acceptor for the enzyme in this species is believed to be plastoquinone. Couples the redox reaction to proton translocation, and thus conserves the redox energy in a proton gradient. The polypeptide is NAD(P)H-quinone oxidoreductase subunit 6, chloroplastic (ndhG) (Huperzia lucidula (Shining clubmoss)).